The following is a 254-amino-acid chain: 3-deoxy-manno-octulosonate cytidylyltransferase (254 aa).

It belongs to the KdsB family.

The protein localises to the cytoplasm. It carries out the reaction 3-deoxy-alpha-D-manno-oct-2-ulosonate + CTP = CMP-3-deoxy-beta-D-manno-octulosonate + diphosphate. The protein operates within nucleotide-sugar biosynthesis; CMP-3-deoxy-D-manno-octulosonate biosynthesis; CMP-3-deoxy-D-manno-octulosonate from 3-deoxy-D-manno-octulosonate and CTP: step 1/1. Its pathway is bacterial outer membrane biogenesis; lipopolysaccharide biosynthesis. Its function is as follows. Activates KDO (a required 8-carbon sugar) for incorporation into bacterial lipopolysaccharide in Gram-negative bacteria. This is 3-deoxy-manno-octulosonate cytidylyltransferase from Pseudomonas putida (strain GB-1).